A 185-amino-acid chain; its full sequence is MINTIKQDAKNRMEKTLSVYLSDVDGIRTGRARASVLDGIVVETYGGRVKLNTISSISVSDNKTLLVKVWEINNVGAIKTAIINSNLGFGFSCEGAVIRLTVPDMTQDMRKNLVKLLGKISEDCRISIRNIRRDIMDKLKIMQDNKDISEDDLRIAGVEIQKITDEIIKKINDTFLAKEKELLHV.

It belongs to the RRF family.

Its subcellular location is the cytoplasm. Functionally, responsible for the release of ribosomes from messenger RNA at the termination of protein biosynthesis. May increase the efficiency of translation by recycling ribosomes from one round of translation to another. This is Ribosome-recycling factor from Ehrlichia ruminantium (strain Welgevonden).